We begin with the raw amino-acid sequence, 73 residues long: Pollen allergen Amb t 5 (73 aa).

An N-terminal signal peptide occupies residues methionine 1–alanine 20. The propeptide occupies isoleucine 21–glutamate 33. Disulfide bonds link cysteine 38–cysteine 68, cysteine 44–cysteine 59, cysteine 51–cysteine 61, and cysteine 52–cysteine 72.

As to quaternary structure, monomer.

This is Pollen allergen Amb t 5 from Ambrosia trifida (Giant ragweed).